Reading from the N-terminus, the 207-residue chain is Small ribosomal subunit protein eS1 (207 aa).

It belongs to the eukaryotic ribosomal protein eS1 family.

This is Small ribosomal subunit protein eS1 from Methanosarcina barkeri (strain Fusaro / DSM 804).